A 361-amino-acid chain; its full sequence is D-alanine--D-alanine ligase (361 aa).

In terms of domain architecture, ATP-grasp spans lysine 144–glutamine 350. Proline 177–glutamate 232 provides a ligand contact to ATP. Positions 303, 317, and 319 each coordinate Mg(2+).

Belongs to the D-alanine--D-alanine ligase family. Mg(2+) is required as a cofactor. It depends on Mn(2+) as a cofactor.

The protein localises to the cytoplasm. The enzyme catalyses 2 D-alanine + ATP = D-alanyl-D-alanine + ADP + phosphate + H(+). It functions in the pathway cell wall biogenesis; peptidoglycan biosynthesis. In terms of biological role, cell wall formation. The polypeptide is D-alanine--D-alanine ligase (Chlorobium phaeovibrioides (strain DSM 265 / 1930) (Prosthecochloris vibrioformis (strain DSM 265))).